A 290-amino-acid chain; its full sequence is Glutamate 5-kinase (290 aa).

Lys-21 provides a ligand contact to ATP. Residues Ser-60, Asp-151, and Asn-163 each contribute to the substrate site. 217-223 (TGGMFTK) contributes to the ATP binding site.

This sequence belongs to the glutamate 5-kinase family.

The protein resides in the cytoplasm. The catalysed reaction is L-glutamate + ATP = L-glutamyl 5-phosphate + ADP. It participates in amino-acid biosynthesis; L-proline biosynthesis; L-glutamate 5-semialdehyde from L-glutamate: step 1/2. Its function is as follows. Catalyzes the transfer of a phosphate group to glutamate to form L-glutamate 5-phosphate. In Leptospira interrogans serogroup Icterohaemorrhagiae serovar copenhageni (strain Fiocruz L1-130), this protein is Glutamate 5-kinase.